The sequence spans 293 residues: Diaminopimelate epimerase (293 aa).

The substrate site is built by Asn17, Gln49, and Asn69. Cys78 acts as the Proton donor in catalysis. Residues 79–80 (GN), Asn169, Asn203, and 221–222 (ER) contribute to the substrate site. Cys230 (proton acceptor) is an active-site residue. Substrate is bound at residue 231–232 (GS).

It belongs to the diaminopimelate epimerase family. As to quaternary structure, homodimer.

The protein localises to the cytoplasm. The enzyme catalyses (2S,6S)-2,6-diaminopimelate = meso-2,6-diaminopimelate. It functions in the pathway amino-acid biosynthesis; L-lysine biosynthesis via DAP pathway; DL-2,6-diaminopimelate from LL-2,6-diaminopimelate: step 1/1. In terms of biological role, catalyzes the stereoinversion of LL-2,6-diaminopimelate (L,L-DAP) to meso-diaminopimelate (meso-DAP), a precursor of L-lysine and an essential component of the bacterial peptidoglycan. The polypeptide is Diaminopimelate epimerase (Methylobacterium sp. (strain 4-46)).